The sequence spans 351 residues: Heat-inducible transcription repressor HrcA (351 aa).

The protein belongs to the HrcA family.

Negative regulator of class I heat shock genes (grpE-dnaK-dnaJ and groELS operons). Prevents heat-shock induction of these operons. The sequence is that of Heat-inducible transcription repressor HrcA from Mycoplasma pneumoniae (strain ATCC 29342 / M129 / Subtype 1) (Mycoplasmoides pneumoniae).